Here is a 193-residue protein sequence, read N- to C-terminus: dTTP/UTP pyrophosphatase (193 aa).

D71 acts as the Proton acceptor in catalysis.

Belongs to the Maf family. YhdE subfamily. The cofactor is a divalent metal cation.

The protein localises to the cytoplasm. It carries out the reaction dTTP + H2O = dTMP + diphosphate + H(+). The catalysed reaction is UTP + H2O = UMP + diphosphate + H(+). Functionally, nucleoside triphosphate pyrophosphatase that hydrolyzes dTTP and UTP. May have a dual role in cell division arrest and in preventing the incorporation of modified nucleotides into cellular nucleic acids. The sequence is that of dTTP/UTP pyrophosphatase from Dictyoglomus thermophilum (strain ATCC 35947 / DSM 3960 / H-6-12).